The primary structure comprises 171 residues: Co-chaperone protein HscB homolog (171 aa).

The J domain maps to 2–74 (NHFELFRLPF…ISRAEYMLSE (73 aa)).

Belongs to the HscB family. As to quaternary structure, interacts with HscA and stimulates its ATPase activity.

Functionally, co-chaperone involved in the maturation of iron-sulfur cluster-containing proteins. Seems to help targeting proteins to be folded toward HscA. The chain is Co-chaperone protein HscB homolog from Photobacterium profundum (strain SS9).